The primary structure comprises 196 residues: SERTA domain-containing protein 3 (196 aa).

Positions 1 to 21 (MVGGLKRKHSDLEEEEERWEW) are disordered. The region spanning 26–73 (LQSYQQALLRISLDKVQRSLGPRAPSLRRHVLIHNTLQQLQAALRLAP) is the SERTA domain. Residues 104-125 (TSMDGTEPPQNPVTPLGLQNEV) form a disordered region.

Interacts with RPA2. In terms of assembly, (Microbial infection) Interacts with influenza virus PA, PB1 and PB2,leading to inhibition of RdRp complex assembly. As to quaternary structure, (Microbial infection) Interacts with zika virus capsid protein.

It localises to the nucleus. In terms of biological role, antiviral interferon-stimulated protein that plays a role in innate immunity and in the suppression of viruses through different mechanisms. Plays a role in the late phase response of TLR-induced immune effector expression. During influenza infection, interacts with PB2, PB1, and PA to disrupt the formation of the viral RdRp complex. Inhibits zika virus by interacting with the capsid protein in the nucleolus and reducing its abundance through proteasomal degradation. Strong transcriptional coactivator. This chain is SERTA domain-containing protein 3 (SERTAD3), found in Homo sapiens (Human).